We begin with the raw amino-acid sequence, 129 residues long: Prefoldin subunit 4 (129 aa).

Met1 carries the N-acetylmethionine modification.

The protein belongs to the prefoldin subunit beta family. As to quaternary structure, heterohexamer of two PFD-alpha type and four PFD-beta type subunits.

Functionally, binds specifically to cytosolic chaperonin (c-CPN) and transfers target proteins to it. Binds to nascent polypeptide chain and promotes folding in an environment in which there are many competing pathways for nonnative proteins. The polypeptide is Prefoldin subunit 4 (GIM3) (Saccharomyces cerevisiae (strain ATCC 204508 / S288c) (Baker's yeast)).